A 228-amino-acid chain; its full sequence is Cytochrome c biogenesis ATP-binding export protein CcmA (228 aa).

Residues 2–227 enclose the ABC transporter domain; the sequence is LSIERLGVGR…LHLERSGAWL (226 aa). 34 to 41 serves as a coordination point for ATP; that stretch reads GANGSGKT. The interval 106 to 126 is disordered; the sequence is GAPDGTSSVPASGRSGVAAPP.

This sequence belongs to the ABC transporter superfamily. CcmA exporter (TC 3.A.1.107) family. The complex is composed of two ATP-binding proteins (CcmA) and two transmembrane proteins (CcmB).

Its subcellular location is the cell inner membrane. It carries out the reaction heme b(in) + ATP + H2O = heme b(out) + ADP + phosphate + H(+). Functionally, part of the ABC transporter complex CcmAB involved in the biogenesis of c-type cytochromes; once thought to export heme, this seems not to be the case, but its exact role is uncertain. Responsible for energy coupling to the transport system. The polypeptide is Cytochrome c biogenesis ATP-binding export protein CcmA (Paraburkholderia xenovorans (strain LB400)).